The chain runs to 319 residues: L-lactate dehydrogenase (319 aa).

NAD(+) is bound by residues valine 17, aspartate 38, lysine 43, tyrosine 69, and 83–84 (GA). Substrate is bound by residues glutamine 86, arginine 92, and 124-127 (NPVD). Residues 122 to 124 (ATN) and serine 147 contribute to the NAD(+) site. Residue 152-155 (DTAR) coordinates substrate. 2 residues coordinate beta-D-fructose 1,6-bisphosphate: arginine 157 and histidine 172. Histidine 179 acts as the Proton acceptor in catalysis. Residue tyrosine 224 is modified to Phosphotyrosine. Threonine 233 is a substrate binding site.

Belongs to the LDH/MDH superfamily. LDH family. Homotetramer.

Its subcellular location is the cytoplasm. It carries out the reaction (S)-lactate + NAD(+) = pyruvate + NADH + H(+). Its pathway is fermentation; pyruvate fermentation to lactate; (S)-lactate from pyruvate: step 1/1. With respect to regulation, allosterically activated by fructose 1,6-bisphosphate (FBP). Catalyzes the conversion of lactate to pyruvate. The polypeptide is L-lactate dehydrogenase (Bacillus licheniformis (strain ATCC 14580 / DSM 13 / JCM 2505 / CCUG 7422 / NBRC 12200 / NCIMB 9375 / NCTC 10341 / NRRL NRS-1264 / Gibson 46)).